Reading from the N-terminus, the 287-residue chain is Phosphatidylserine decarboxylase proenzyme (287 aa).

Catalysis depends on charge relay system; for autoendoproteolytic cleavage activity residues Asp-90, His-147, and Ser-252. Residue Ser-252 is the Schiff-base intermediate with substrate; via pyruvic acid; for decarboxylase activity of the active site. Ser-252 is modified (pyruvic acid (Ser); by autocatalysis).

This sequence belongs to the phosphatidylserine decarboxylase family. PSD-B subfamily. Prokaryotic type I sub-subfamily. In terms of assembly, heterodimer of a large membrane-associated beta subunit and a small pyruvoyl-containing alpha subunit. Pyruvate is required as a cofactor. In terms of processing, is synthesized initially as an inactive proenzyme. Formation of the active enzyme involves a self-maturation process in which the active site pyruvoyl group is generated from an internal serine residue via an autocatalytic post-translational modification. Two non-identical subunits are generated from the proenzyme in this reaction, and the pyruvate is formed at the N-terminus of the alpha chain, which is derived from the carboxyl end of the proenzyme. The autoendoproteolytic cleavage occurs by a canonical serine protease mechanism, in which the side chain hydroxyl group of the serine supplies its oxygen atom to form the C-terminus of the beta chain, while the remainder of the serine residue undergoes an oxidative deamination to produce ammonia and the pyruvoyl prosthetic group on the alpha chain. During this reaction, the Ser that is part of the protease active site of the proenzyme becomes the pyruvoyl prosthetic group, which constitutes an essential element of the active site of the mature decarboxylase.

It is found in the cell membrane. The enzyme catalyses a 1,2-diacyl-sn-glycero-3-phospho-L-serine + H(+) = a 1,2-diacyl-sn-glycero-3-phosphoethanolamine + CO2. It functions in the pathway phospholipid metabolism; phosphatidylethanolamine biosynthesis; phosphatidylethanolamine from CDP-diacylglycerol: step 2/2. Its function is as follows. Catalyzes the formation of phosphatidylethanolamine (PtdEtn) from phosphatidylserine (PtdSer). The chain is Phosphatidylserine decarboxylase proenzyme from Pseudomonas entomophila (strain L48).